The following is a 483-amino-acid chain: ATP synthase subunit beta (483 aa).

162–169 contributes to the ATP binding site; sequence GGAGVGKT.

Belongs to the ATPase alpha/beta chains family. As to quaternary structure, F-type ATPases have 2 components, CF(1) - the catalytic core - and CF(0) - the membrane proton channel. CF(1) has five subunits: alpha(3), beta(3), gamma(1), delta(1), epsilon(1). CF(0) has four main subunits: a(1), b(1), b'(1) and c(9-12).

The protein localises to the cellular thylakoid membrane. The catalysed reaction is ATP + H2O + 4 H(+)(in) = ADP + phosphate + 5 H(+)(out). Produces ATP from ADP in the presence of a proton gradient across the membrane. The catalytic sites are hosted primarily by the beta subunits. This Prochloron didemni protein is ATP synthase subunit beta.